The sequence spans 564 residues: Dihydroxy-acid dehydratase (564 aa).

Cysteine 55 serves as a coordination point for [2Fe-2S] cluster. Aspartate 87 serves as a coordination point for Mg(2+). Position 128 (cysteine 128) interacts with [2Fe-2S] cluster. Residues aspartate 129 and lysine 130 each contribute to the Mg(2+) site. Lysine 130 is modified (N6-carboxylysine). Cysteine 200 contacts [2Fe-2S] cluster. Glutamate 452 contributes to the Mg(2+) binding site. The Proton acceptor role is filled by serine 478.

This sequence belongs to the IlvD/Edd family. As to quaternary structure, homodimer. [2Fe-2S] cluster is required as a cofactor. The cofactor is Mg(2+).

It catalyses the reaction (2R)-2,3-dihydroxy-3-methylbutanoate = 3-methyl-2-oxobutanoate + H2O. It carries out the reaction (2R,3R)-2,3-dihydroxy-3-methylpentanoate = (S)-3-methyl-2-oxopentanoate + H2O. The protein operates within amino-acid biosynthesis; L-isoleucine biosynthesis; L-isoleucine from 2-oxobutanoate: step 3/4. It participates in amino-acid biosynthesis; L-valine biosynthesis; L-valine from pyruvate: step 3/4. Its function is as follows. Functions in the biosynthesis of branched-chain amino acids. Catalyzes the dehydration of (2R,3R)-2,3-dihydroxy-3-methylpentanoate (2,3-dihydroxy-3-methylvalerate) into 2-oxo-3-methylpentanoate (2-oxo-3-methylvalerate) and of (2R)-2,3-dihydroxy-3-methylbutanoate (2,3-dihydroxyisovalerate) into 2-oxo-3-methylbutanoate (2-oxoisovalerate), the penultimate precursor to L-isoleucine and L-valine, respectively. The polypeptide is Dihydroxy-acid dehydratase (Polaromonas sp. (strain JS666 / ATCC BAA-500)).